The chain runs to 203 residues: MIVVLRLGHRPERDKRVTTHVALTARAFGADGIIIASEEDEKVKESVEDVVKRWGGPFFIEFNRNWRKVMKEFTGVKVHLTMYGLHVDDVIEELKEKLKKGEDFMIIVGAEKVPREVYELADYNVAIGNQPHSEVAALAVLLDRLLEGKGLKKEFKGAKIKIVPQARGKKVVEVQGYAEQDKAEGKATPGKNWENSGFTGDNP.

Residues Leu80, 109–113 (GAEKV), and 127–134 (IGNQPHSE) each bind S-adenosyl-L-methionine. A disordered region spans residues 178–203 (AEQDKAEGKATPGKNWENSGFTGDNP). Residues 193-203 (WENSGFTGDNP) show a composition bias toward polar residues.

This sequence belongs to the aTrm56 family. Homodimer.

It is found in the cytoplasm. The enzyme catalyses cytidine(56) in tRNA + S-adenosyl-L-methionine = 2'-O-methylcytidine(56) in tRNA + S-adenosyl-L-homocysteine + H(+). In terms of biological role, specifically catalyzes the AdoMet-dependent 2'-O-ribose methylation of cytidine at position 56 in tRNAs. The polypeptide is tRNA (cytidine(56)-2'-O)-methyltransferase (Pyrococcus horikoshii (strain ATCC 700860 / DSM 12428 / JCM 9974 / NBRC 100139 / OT-3)).